Here is a 238-residue protein sequence, read N- to C-terminus: ATP-dependent dethiobiotin synthetase BioD (238 aa).

Position 13 to 18 (13 to 18 (DIGKTF)) interacts with ATP. Residue T17 participates in Mg(2+) binding. The active site involves K38. S42 contributes to the substrate binding site. ATP contacts are provided by residues D55, 116–119 (EGSG), 209–211 (PRI), and N216. Mg(2+) is bound by residues D55 and E116.

This sequence belongs to the dethiobiotin synthetase family. In terms of assembly, homodimer. It depends on Mg(2+) as a cofactor.

Its subcellular location is the cytoplasm. The catalysed reaction is (7R,8S)-7,8-diammoniononanoate + CO2 + ATP = (4R,5S)-dethiobiotin + ADP + phosphate + 3 H(+). It functions in the pathway cofactor biosynthesis; biotin biosynthesis; biotin from 7,8-diaminononanoate: step 1/2. Catalyzes a mechanistically unusual reaction, the ATP-dependent insertion of CO2 between the N7 and N8 nitrogen atoms of 7,8-diaminopelargonic acid (DAPA, also called 7,8-diammoniononanoate) to form a ureido ring. In Clostridium novyi (strain NT), this protein is ATP-dependent dethiobiotin synthetase BioD.